The sequence spans 361 residues: Gibberellin 20 oxidase 1-D (361 aa).

The Fe2OG dioxygenase domain maps to 199–299; sequence GNDSIMRLNY…RKSLAFFLCP (101 aa). Fe cation-binding residues include His224, Asp226, and His280. Arg290 is a catalytic residue.

It belongs to the iron/ascorbate-dependent oxidoreductase family. GA20OX subfamily. Requires Fe cation as cofactor. L-ascorbate is required as a cofactor. Expressed in nodes and the ear of the elongating stem.

It catalyses the reaction gibberellin A12 + 2 2-oxoglutarate + 3 O2 + H(+) = gibberellin A9 + 2 succinate + 3 CO2 + 2 H2O. It carries out the reaction gibberellin A53 + 2 2-oxoglutarate + 3 O2 + H(+) = gibberellin A20 + 2 succinate + 3 CO2 + 2 H2O. In terms of biological role, key oxidase enzyme in the biosynthesis of gibberellin that catalyzes the conversion of GA12 and GA53 to GA9 and GA20 respectively, via a three-step oxidation at C-20 of the GA skeleton. In Triticum aestivum (Wheat), this protein is Gibberellin 20 oxidase 1-D (GA20ox1D).